Here is a 451-residue protein sequence, read N- to C-terminus: Glycine--tRNA ligase (451 aa).

Substrate-binding residues include arginine 101 and glutamate 151. Residues 183–185, 193–198, 267–268, and 312–315 contribute to the ATP site; these read RNE, FRTCEF, EL, and GLTR. Position 198 to 202 (198 to 202) interacts with substrate; sequence FEQME. Residue 308–312 coordinates substrate; that stretch reads ETSAG.

This sequence belongs to the class-II aminoacyl-tRNA synthetase family. Homodimer.

The protein resides in the cytoplasm. It carries out the reaction tRNA(Gly) + glycine + ATP = glycyl-tRNA(Gly) + AMP + diphosphate. In terms of biological role, catalyzes the attachment of glycine to tRNA(Gly). The polypeptide is Glycine--tRNA ligase (Treponema denticola (strain ATCC 35405 / DSM 14222 / CIP 103919 / JCM 8153 / KCTC 15104)).